The sequence spans 67 residues: Conotoxin LeDr192 (67 aa).

A signal peptide spans 1 to 19 (MRCFPVFIILLLLIASAPC). Residues 20–49 (FDARTKTDDDVPLSPLRDNLKRTIRTRLNI) constitute a propeptide that is removed on maturation. The residue at position 65 (Thr65) is a Threonine amide.

The protein belongs to the conotoxin T superfamily. Post-translationally, contains 2 disulfide bonds that can be either 'C1-C3, C2-C4' or 'C1-C4, C2-C3', since these disulfide connectivities have been observed for conotoxins with cysteine framework V (for examples, see AC P0DQQ7 and AC P81755). In terms of tissue distribution, expressed by the venom duct.

It localises to the secreted. The sequence is that of Conotoxin LeDr192 from Conus litteratus (Lettered cone).